We begin with the raw amino-acid sequence, 172 residues long: PRELI domain containing protein 3A (172 aa).

The PRELI/MSF1 domain maps to 1 to 172; that stretch reads MKIWSSEHVF…IIEHSESAVS (172 aa).

The protein belongs to the slowmo family. In terms of assembly, interacts with TRIAP1.

It is found in the mitochondrion. In terms of biological role, in vitro, the TRIAP1:PRELID3A complex mediates the transfer of phosphatidic acid (PA) between liposomes and probably functions as a PA transporter across the mitochondrion intermembrane space. Phosphatidic acid import is required for cardiolipin (CL) synthesis in the mitochondrial inner membrane. The protein is PRELI domain containing protein 3A (PRELID3A) of Homo sapiens (Human).